Here is a 159-residue protein sequence, read N- to C-terminus: Phosphoribosylaminoimidazole carboxylase (159 aa).

Positions 11, 14, 38, 41, 67, and 69 each coordinate substrate.

The enzyme catalyses 5-amino-1-(5-phospho-D-ribosyl)imidazole-4-carboxylate + H(+) = 5-amino-1-(5-phospho-beta-D-ribosyl)imidazole + CO2. It participates in purine metabolism; IMP biosynthesis via de novo pathway; 5-amino-1-(5-phospho-D-ribosyl)imidazole-4-carboxylate from 5-amino-1-(5-phospho-D-ribosyl)imidazole (carboxylase route): step 1/1. Catalyzes the reversible conversion of 5-aminoimidazole ribonucleotide (AIR) and CO(2) to 4-carboxy-5-aminoimidazole ribonucleotide (CAIR). Does not accept N5-carboxyaminoimidazole ribonucleotide (N5-CAIR) as a substrate. The protein is Phosphoribosylaminoimidazole carboxylase of Treponema denticola (strain ATCC 35405 / DSM 14222 / CIP 103919 / JCM 8153 / KCTC 15104).